The primary structure comprises 470 residues: Ribosomal protein uS12 methylthiotransferase RimO (470 aa).

Positions 20–131 (PTVAFAHLGC…IVEVLQQVEA (112 aa)) constitute an MTTase N-terminal domain. [4Fe-4S] cluster is bound by residues Cys-29, Cys-65, Cys-94, Cys-169, Cys-173, and Cys-176. The 230-residue stretch at 155-384 (TTGEAVAYLK…MTLQQPISAA (230 aa)) folds into the Radical SAM core domain. The TRAM domain occupies 387-458 (ASWIGKTVDV…IYDLSGHVVS (72 aa)).

The protein belongs to the methylthiotransferase family. RimO subfamily. [4Fe-4S] cluster serves as cofactor.

The protein resides in the cytoplasm. The enzyme catalyses L-aspartate(89)-[ribosomal protein uS12]-hydrogen + (sulfur carrier)-SH + AH2 + 2 S-adenosyl-L-methionine = 3-methylsulfanyl-L-aspartate(89)-[ribosomal protein uS12]-hydrogen + (sulfur carrier)-H + 5'-deoxyadenosine + L-methionine + A + S-adenosyl-L-homocysteine + 2 H(+). Its function is as follows. Catalyzes the methylthiolation of an aspartic acid residue of ribosomal protein uS12. This Synechococcus sp. (strain CC9311) protein is Ribosomal protein uS12 methylthiotransferase RimO.